The primary structure comprises 223 residues: Endonuclease V (223 aa).

2 residues coordinate Mg(2+): Asp35 and Asp103.

This sequence belongs to the endonuclease V family. Mg(2+) serves as cofactor.

It localises to the cytoplasm. The enzyme catalyses Endonucleolytic cleavage at apurinic or apyrimidinic sites to products with a 5'-phosphate.. In terms of biological role, DNA repair enzyme involved in the repair of deaminated bases. Selectively cleaves double-stranded DNA at the second phosphodiester bond 3' to a deoxyinosine leaving behind the intact lesion on the nicked DNA. The polypeptide is Endonuclease V (Salmonella agona (strain SL483)).